The chain runs to 96 residues: Cytoplasmic envelopment protein 3 (96 aa).

A lipid anchor (N-myristoyl glycine; by host) is attached at Gly2. The Di-leucine-like internalization motif signature appears at 18 to 19 (LI). Residues 37 to 43 (DIESEEE) are asp/Glu-rich (acidic). Residue Ser40 is modified to Phosphoserine. The interval 57-96 (RAPGRQRLRSSDPPSRHTHRRTPGGACPATQFPPPMSDSE) is disordered. The segment covering 87 to 96 (QFPPPMSDSE) has biased composition (pro residues).

It belongs to the herpesviridae cytoplasmic envelopment protein 3 family. In terms of assembly, interacts with cytoplasmic envelopment protein 2; this interaction is essential for the proper localization of each protein to the assembly complex and thus for the production of infectious virus. Interacts with gE (via C-terminus). Interacts with gD (via C-terminus). Interacts with UL56. Post-translationally, myristoylation and palmitoylation (probably on one or more of the nearby cysteines at the N-terminus) enable membrane-binding and Golgi apparatus-specific targeting and are essential for efficient packaging. Phosphorylated. Phosphorylation does not seem to be required for recycling to the host Golgi apparatus. Packaging is selective for underphosphorylated forms.

Its subcellular location is the virion tegument. It localises to the virion membrane. The protein localises to the host cell membrane. The protein resides in the host Golgi apparatus membrane. In terms of biological role, plays an important role in the cytoplasmic envelopment of tegument proteins and capsids during the assembly and egress processes. Also participates in viral entry at the fusion step probably by regulating the core fusion machinery. The chain is Cytoplasmic envelopment protein 3 from Human herpesvirus 1 (strain KOS) (HHV-1).